Here is a 172-residue protein sequence, read N- to C-terminus: Ribosome maturation factor RimM (172 aa).

Positions 97-170 (ENEFYFHEII…KITIEVMEGL (74 aa)) constitute a PRC barrel domain.

It belongs to the RimM family. As to quaternary structure, binds ribosomal protein uS19.

The protein resides in the cytoplasm. Functionally, an accessory protein needed during the final step in the assembly of 30S ribosomal subunit, possibly for assembly of the head region. Essential for efficient processing of 16S rRNA. May be needed both before and after RbfA during the maturation of 16S rRNA. It has affinity for free ribosomal 30S subunits but not for 70S ribosomes. The polypeptide is Ribosome maturation factor RimM (Listeria monocytogenes serovar 1/2a (strain ATCC BAA-679 / EGD-e)).